The primary structure comprises 253 residues: Phosphoglycerate mutase 2 (253 aa).

The residue at position 3 (T3) is a Phosphothreonine. Residues R10–N17, C23–G24, R62, E89–Y92, K100, and R116–R117 each bind substrate. H11 functions as the Tele-phosphohistidine intermediate in the catalytic mechanism. 2 positions are modified to phosphoserine: S14 and S15. Residue E89 is the Proton donor/acceptor of the active site. S118 is subject to Phosphoserine. At T121 the chain carries Phosphothreonine. Phosphotyrosine occurs at positions 132 and 133. At S135 the chain carries Phosphoserine. T152 carries the post-translational modification Phosphothreonine. G187–N188 lines the substrate pocket.

The protein belongs to the phosphoglycerate mutase family. BPG-dependent PGAM subfamily. Homodimer. Interacts with ENO1.

It catalyses the reaction (2R)-2-phosphoglycerate = (2R)-3-phosphoglycerate. It carries out the reaction (2R)-3-phospho-glyceroyl phosphate = (2R)-2,3-bisphosphoglycerate + H(+). Functionally, interconversion of 3- and 2-phosphoglycerate with 2,3-bisphosphoglycerate as the primer of the reaction. Can also catalyze the reaction of EC 5.4.2.4 (synthase), but with a reduced activity. The protein is Phosphoglycerate mutase 2 (Pgam2) of Rattus norvegicus (Rat).